A 333-amino-acid chain; its full sequence is Nucleoid-associated protein VV1_3120 (333 aa).

The protein belongs to the YejK family.

Its subcellular location is the cytoplasm. It is found in the nucleoid. The chain is Nucleoid-associated protein VV1_3120 from Vibrio vulnificus (strain CMCP6).